The chain runs to 131 residues: D-ribose pyranase (131 aa).

Residue histidine 20 is the Proton donor of the active site. Residues aspartate 28, histidine 98, and 120 to 122 (YAN) each bind substrate.

This sequence belongs to the RbsD / FucU family. RbsD subfamily. Homodecamer.

Its subcellular location is the cytoplasm. The catalysed reaction is beta-D-ribopyranose = beta-D-ribofuranose. The protein operates within carbohydrate metabolism; D-ribose degradation; D-ribose 5-phosphate from beta-D-ribopyranose: step 1/2. Functionally, catalyzes the interconversion of beta-pyran and beta-furan forms of D-ribose. The sequence is that of D-ribose pyranase from Bacillus cereus (strain ATCC 10987 / NRS 248).